Consider the following 277-residue polypeptide: Uridine-cytidine kinase 1 (277 aa).

24-32 (GGTASGKST) lines the ATP pocket. Substrate-binding residues include D81, Y109, H114, R163, R172, and Q180. ATP is bound at residue D209. The tract at residues 241 to 277 (NHGRSLKRGVAEHGENPSGSSSNLTKRPLLEPSTRPH) is disordered.

It belongs to the uridine kinase family.

The catalysed reaction is uridine + ATP = UMP + ADP + H(+). It carries out the reaction cytidine + ATP = CMP + ADP + H(+). It functions in the pathway pyrimidine metabolism; CTP biosynthesis via salvage pathway; CTP from cytidine: step 1/3. Its pathway is pyrimidine metabolism; UMP biosynthesis via salvage pathway; UMP from uridine: step 1/1. Functionally, phosphorylates uridine and cytidine to uridine monophosphate and cytidine monophosphate. Does not phosphorylate deoxyribonucleosides or purine ribonucleosides. Can use ATP or GTP as a phosphate donor. The sequence is that of Uridine-cytidine kinase 1 (uck1) from Danio rerio (Zebrafish).